We begin with the raw amino-acid sequence, 89 residues long: MRSVIWFIVSYTLMLLVLRGGKEVEAEKLCTTIGDLDGKCSQDGEKLCMRYMTDQSKKKFLSCTCNNVVMLHKYKHYCECQSHCTPKQT.

An N-terminal signal peptide occupies residues 1–26; it reads MRSVIWFIVSYTLMLLVLRGGKEVEA. 4 disulfide bridges follow: C30-C84, C40-C65, C48-C78, and C63-C80.

The protein belongs to the DEFL family.

The protein resides in the secreted. The protein is Putative defensin-like protein 230 (SCRL24) of Arabidopsis thaliana (Mouse-ear cress).